The primary structure comprises 400 residues: Phosphoglycerate kinase (400 aa).

Substrate is bound by residues 21–23, arginine 36, 59–62, arginine 114, and arginine 147; these read DLN and HLGR. ATP-binding positions include lysine 202, glutamate 329, and 355 to 358; that span reads GGDT.

It belongs to the phosphoglycerate kinase family. Monomer.

Its subcellular location is the cytoplasm. It catalyses the reaction (2R)-3-phosphoglycerate + ATP = (2R)-3-phospho-glyceroyl phosphate + ADP. The protein operates within carbohydrate degradation; glycolysis; pyruvate from D-glyceraldehyde 3-phosphate: step 2/5. This Psychrobacter cryohalolentis (strain ATCC BAA-1226 / DSM 17306 / VKM B-2378 / K5) protein is Phosphoglycerate kinase.